Reading from the N-terminus, the 95-residue chain is Aspartyl/glutamyl-tRNA(Asn/Gln) amidotransferase subunit C (95 aa).

Basic and acidic residues predominate over residues 55–67 (ALERRNVTREDQV). The tract at residues 55–83 (ALERRNVTREDQVHNSLTNDKALENAPET) is disordered.

It belongs to the GatC family. Heterotrimer of A, B and C subunits.

The enzyme catalyses L-glutamyl-tRNA(Gln) + L-glutamine + ATP + H2O = L-glutaminyl-tRNA(Gln) + L-glutamate + ADP + phosphate + H(+). The catalysed reaction is L-aspartyl-tRNA(Asn) + L-glutamine + ATP + H2O = L-asparaginyl-tRNA(Asn) + L-glutamate + ADP + phosphate + 2 H(+). Allows the formation of correctly charged Asn-tRNA(Asn) or Gln-tRNA(Gln) through the transamidation of misacylated Asp-tRNA(Asn) or Glu-tRNA(Gln) in organisms which lack either or both of asparaginyl-tRNA or glutaminyl-tRNA synthetases. The reaction takes place in the presence of glutamine and ATP through an activated phospho-Asp-tRNA(Asn) or phospho-Glu-tRNA(Gln). The protein is Aspartyl/glutamyl-tRNA(Asn/Gln) amidotransferase subunit C of Natranaerobius thermophilus (strain ATCC BAA-1301 / DSM 18059 / JW/NM-WN-LF).